The following is a 317-amino-acid chain: MDKLEDHDDNNLQSQIEEIEALSSIYGEEWCVIDEAARVFCIRISETQQPKWTVCLQIILPPDYPSSAPPIYQINAAWLRGQDRMTLSNSLEEIYVENAGESILYLWVEKIREFLTEKSQHSDGPDTCKTVMTEEGGHDCDEDDLPDISVLKLSSQSEQIFSPASDDEELPLIKHGESITDRRSTFQPHLSAVENPKQVQRVLNKLYENKKIASATHNIYAYRIYCQEKNSVLQDCEDDGETAAGGRLLHLLQILDVRNVLVVVSRWYGGILLGPDRFKHINNCARTILIQEGYADSTEETSKAGGKSKKPKSKKTK.

The region spanning 17–118 (EEIEALSSIY…EKIREFLTEK (102 aa)) is the RWD domain. The interval 296–317 (DSTEETSKAGGKSKKPKSKKTK) is disordered. Residues 306 to 317 (GKSKKPKSKKTK) show a composition bias toward basic residues.

It belongs to the IMPACT family. In terms of assembly, interacts with GCN1; prevents the interaction of GCN1 with EIF2AK4/GCN2 and inhibits EIF2AK4/GCN2 kinase activity. Interaction with RPL39; this interaction occurs in a GCN1-independent manner. Associates with ribosomes; this interaction occurs in a GCN1-independent manner. Associates with actin; this interaction occurs in a GCN1-independent manner.

It is found in the cytoplasm. Its function is as follows. Translational regulator that ensures constant high levels of translation upon a variety of stress conditions, such as amino acid starvation, UV-C irradiation, proteasome inhibitor treatment and glucose deprivation. Plays a role as a negative regulator of the EIF2AK4/GCN2 kinase activity; impairs GCN1-mediated EIF2AK4/GCN2 activation, and hence EIF2AK4/GCN2-mediated eIF-2-alpha phosphorylation and subsequent down-regulation of protein synthesis. Plays a role in differentiation of neuronal cells by stimulating neurite outgrowth. The protein is Protein IMPACT-B (impact-B) of Xenopus tropicalis (Western clawed frog).